The chain runs to 312 residues: Bifunctional pinoresinol-lariciresinol reductase (312 aa).

NADP(+)-binding positions include 10–16 (GGTGYLG), Arg-35, and Lys-44. Lys-139 functions as the Proton acceptor in the catalytic mechanism. Arg-143 is a binding site for NADP(+). His-271 is a substrate binding site.

It belongs to the NmrA-type oxidoreductase family. Isoflavone reductase subfamily. Dimer. As to expression, expressed in young stems, young roots and petioles. In stems, expressed in radial parenchyma cells and in the cambial cells of developing secondary xylem.

The catalysed reaction is (+)-lariciresinol + NADP(+) = (+)-pinoresinol + NADPH + H(+). It catalyses the reaction (-)-secoisolariciresinol + NADP(+) = (+)-lariciresinol + NADPH + H(+). Its function is as follows. Reductase involved in lignan biosynthesis. Catalyzes the enantioselective sequential conversion of (+)-pinoresinol into (+)-lariciresinol and of (+)-lariciresinol into (-)-secoisolariciresinol. Abstracts the 4R-hydride from the NADPH cofactor during catalysis. In Forsythia intermedia (Border forsythia), this protein is Bifunctional pinoresinol-lariciresinol reductase (PLR_Fi1).